The primary structure comprises 30 residues: Cycloviolacin-O7 (30 aa).

Residues 1 to 30 constitute a cross-link (cyclopeptide (Ser-Asn)); it reads SIPCGESCVWIPCTITALAGCKCKSKVCYN. 3 cysteine pairs are disulfide-bonded: Cys-4–Cys-21, Cys-8–Cys-23, and Cys-13–Cys-28.

This is a cyclic peptide.

Probably participates in a plant defense mechanism. This chain is Cycloviolacin-O7, found in Viola odorata (Sweet violet).